A 183-amino-acid polypeptide reads, in one-letter code: A-type ATP synthase subunit E (183 aa).

The protein belongs to the V-ATPase E subunit family. Has multiple subunits with at least A(3), B(3), C, D, E, F, H, I and proteolipid K(x).

The protein localises to the cell membrane. Component of the A-type ATP synthase that produces ATP from ADP in the presence of a proton gradient across the membrane. This chain is A-type ATP synthase subunit E, found in Methanococcoides burtonii (strain DSM 6242 / NBRC 107633 / OCM 468 / ACE-M).